A 513-amino-acid chain; its full sequence is ATP synthase subunit alpha (513 aa).

Residue 169–176 (GDRQTGKT) participates in ATP binding.

This sequence belongs to the ATPase alpha/beta chains family. As to quaternary structure, F-type ATPases have 2 components, CF(1) - the catalytic core - and CF(0) - the membrane proton channel. CF(1) has five subunits: alpha(3), beta(3), gamma(1), delta(1), epsilon(1). CF(0) has three main subunits: a(1), b(2) and c(9-12). The alpha and beta chains form an alternating ring which encloses part of the gamma chain. CF(1) is attached to CF(0) by a central stalk formed by the gamma and epsilon chains, while a peripheral stalk is formed by the delta and b chains.

The protein localises to the cell inner membrane. It carries out the reaction ATP + H2O + 4 H(+)(in) = ADP + phosphate + 5 H(+)(out). In terms of biological role, produces ATP from ADP in the presence of a proton gradient across the membrane. The alpha chain is a regulatory subunit. In Cupriavidus pinatubonensis (strain JMP 134 / LMG 1197) (Cupriavidus necator (strain JMP 134)), this protein is ATP synthase subunit alpha.